Here is a 134-residue protein sequence, read N- to C-terminus: Protein Turandot E (134 aa).

The signal sequence occupies residues 1–38 (MSYTRTVHSSTSILKMNSALQISCLLVVLGCLLGSGHC).

It belongs to the Turandot family.

Its subcellular location is the secreted. In terms of biological role, a humoral factor that may play a role in stress tolerance. The sequence is that of Protein Turandot E from Drosophila simulans (Fruit fly).